Reading from the N-terminus, the 380-residue chain is Endopolygalacturonase AN8327 (380 aa).

The first 19 residues, 1-19, serve as a signal peptide directing secretion; sequence MFYALGPLALFAFATEVMA. Residues 20 to 35 constitute a propeptide that is removed on maturation; sequence TPVAYPMTTASPTLAK. Cysteines 39 and 57 form a disulfide. PbH1 repeat units follow at residues 147 to 169, 170 to 200, 201 to 222, 223 to 243, 252 to 273, 281 to 303, and 315 to 338; these read LTDSTIQNLYIENTPVQAVSING, CDGLTITDMTIDNSAGDDAGGHNTDGFDIGE, SSNVVITGAKVYNQDDCVAVNS, GTSITFSGGTCSGGHGLSIGS, VDTVTFKDSTVSNSVNGIRIKA, IKGVTYSGISLESISDYGILIEQ, and TSGIPITDLTIENISGSGAVDSDG. Catalysis depends on Asp215, which acts as the Proton donor. The cysteines at positions 217 and 233 are disulfide-linked. The active site involves His237. Asn327 carries an N-linked (GlcNAc...) asparagine glycan. A disulfide bond links Cys345 and Cys350. Asn352 is a glycosylation site (N-linked (GlcNAc...) asparagine). A disulfide bridge links Cys369 with Cys378.

Belongs to the glycosyl hydrolase 28 family.

The protein resides in the secreted. It carries out the reaction (1,4-alpha-D-galacturonosyl)n+m + H2O = (1,4-alpha-D-galacturonosyl)n + (1,4-alpha-D-galacturonosyl)m.. Functionally, involved in maceration and soft-rotting of plant tissue. Hydrolyzes the 1,4-alpha glycosidic bonds of de-esterified pectate in the smooth region of the plant cell wall. This Emericella nidulans (strain FGSC A4 / ATCC 38163 / CBS 112.46 / NRRL 194 / M139) (Aspergillus nidulans) protein is Endopolygalacturonase AN8327.